The sequence spans 472 residues: Eukaryotic translation initiation factor 2 subunit 3, X-linked (472 aa).

Residue A2 is modified to N-acetylalanine. S16 carries the post-translational modification Phosphoserine. One can recognise a tr-type G domain in the interval 39–248; it reads QATINIGTIG…IVKKIPVPPR (210 aa). Residues 48 to 55 form a G1 region; the sequence is GHVAHGKS. 51–56 provides a ligand contact to GTP; sequence AHGKST. The G2 stretch occupies residues 76-80; that stretch reads NITIK. The G3 stretch occupies residues 134–137; that stretch reads DCPG. GTP-binding positions include 190 to 193 and 225 to 227; these read NKID and SAQ. Positions 190-193 are G4; that stretch reads NKID. The G5 stretch occupies residues 225–227; the sequence is SAQ. Residues 457–469 are interacts with Cdc123; sequence GQIRRGVTIKPTV.

This sequence belongs to the TRAFAC class translation factor GTPase superfamily. Classic translation factor GTPase family. EIF2G subfamily. Eukaryotic translation initiation factor 2 eIF2 is a heterotrimeric complex composed of an alpha (EIF2S1), a beta (EIF2S2) and a gamma (EIF2S3) chain. eIF2 is member of the 43S pre-initiation complex (43S PIC). Interacts (via C-terminus) with CDC123; the interaction is direct. As to expression, widely expressed. In the brain, high mRNA levels are observed in specific regions, including the habenula, anterodorsal thalamic nucleus, hippocampus, hypothalamus, and cerebellum. Also expressed in the embryonic brain. There is a differential expression between males and females, which is tissue-specific. Females tend to have higher expression levels than males in the brain (cortex, hippocampus and paraventricular nucleus, but not in the habenula), as well as in other tissues. The up-regulation observed in females at the mRNA level may be due to the presence of 2 active copies of the gene.

It localises to the cytoplasm. The protein localises to the cytosol. The enzyme catalyses GTP + H2O = GDP + phosphate + H(+). Its function is as follows. Member of the eIF2 complex that functions in the early steps of protein synthesis by forming a ternary complex with GTP and initiator tRNA. This complex binds to a 40S ribosomal subunit, followed by mRNA binding to form the 43S pre-initiation complex (43S PIC). Junction of the 60S ribosomal subunit to form the 80S initiation complex is preceded by hydrolysis of the GTP bound to eIF2 and release of an eIF2-GDP binary complex. In order for eIF2 to recycle and catalyze another round of initiation, the GDP bound to eIF2 must exchange with GTP by way of a reaction catalyzed by eIF-2B. Along with its paralog on chromosome Y, may contribute to spermatogenesis up to the round spermatid stage. This Mus musculus (Mouse) protein is Eukaryotic translation initiation factor 2 subunit 3, X-linked (Eif2s3x).